Reading from the N-terminus, the 366-residue chain is Ribonuclease P protein subunit drpp30 (366 aa).

The tract at residues 265 to 366 (EDTQPTNNNI…DIDNNKRKRE (102 aa)) is disordered. Basic and acidic residues predominate over residues 275-290 (PHEKHINKESTGKETI). 2 stretches are compositionally biased toward low complexity: residues 291–324 (PKPTTTTTTTTTTTTTAKTKTPTPTPTTEKTPSI) and 333–351 (TAKSNKKTTTNTTSTAQKQ). Residues 352-366 (GKMDIDIDNNKRKRE) show a composition bias toward basic and acidic residues.

It belongs to the eukaryotic/archaeal RNase P protein component 3 family.

The protein resides in the nucleus. The enzyme catalyses Endonucleolytic cleavage of RNA, removing 5'-extranucleotides from tRNA precursor.. Functionally, component of ribonuclease P, a protein complex that generates mature tRNA molecules by cleaving their 5'-ends. In Dictyostelium discoideum (Social amoeba), this protein is Ribonuclease P protein subunit drpp30 (drpp30).